Here is a 466-residue protein sequence, read N- to C-terminus: Histidine--tRNA ligase (466 aa).

Belongs to the class-II aminoacyl-tRNA synthetase family. As to quaternary structure, homodimer.

It localises to the cytoplasm. It carries out the reaction tRNA(His) + L-histidine + ATP = L-histidyl-tRNA(His) + AMP + diphosphate + H(+). The sequence is that of Histidine--tRNA ligase from Xylella fastidiosa (strain M12).